The following is a 253-amino-acid chain: Hydroxyacylglutathione hydrolase (253 aa).

Zn(2+) contacts are provided by His54, His56, Asp58, His59, His112, Asp131, and His169.

The protein belongs to the metallo-beta-lactamase superfamily. Glyoxalase II family. In terms of assembly, monomer. The cofactor is Zn(2+).

It catalyses the reaction an S-(2-hydroxyacyl)glutathione + H2O = a 2-hydroxy carboxylate + glutathione + H(+). It functions in the pathway secondary metabolite metabolism; methylglyoxal degradation; (R)-lactate from methylglyoxal: step 2/2. In terms of biological role, thiolesterase that catalyzes the hydrolysis of S-D-lactoyl-glutathione to form glutathione and D-lactic acid. The chain is Hydroxyacylglutathione hydrolase from Bartonella henselae (strain ATCC 49882 / DSM 28221 / CCUG 30454 / Houston 1) (Rochalimaea henselae).